A 151-amino-acid chain; its full sequence is Aspartate carbamoyltransferase regulatory chain (151 aa).

Cys-107, Cys-112, Cys-135, and Cys-138 together coordinate Zn(2+).

This sequence belongs to the PyrI family. As to quaternary structure, contains catalytic and regulatory chains. The cofactor is Zn(2+).

Its function is as follows. Involved in allosteric regulation of aspartate carbamoyltransferase. The sequence is that of Aspartate carbamoyltransferase regulatory chain from Thermococcus gammatolerans (strain DSM 15229 / JCM 11827 / EJ3).